The sequence spans 67 residues: Protein AaeX (67 aa).

The next 2 membrane-spanning stretches (helical) occupy residues 3 to 23 (LLPV…ELLI) and 39 to 59 (GIYE…CCLF).

It belongs to the AaeX family.

It is found in the cell membrane. This Yersinia pseudotuberculosis serotype O:1b (strain IP 31758) protein is Protein AaeX.